Here is a 57-residue protein sequence, read N- to C-terminus: Large ribosomal subunit protein uL30 (57 aa).

It belongs to the universal ribosomal protein uL30 family. In terms of assembly, part of the 50S ribosomal subunit.

In Clostridium acetobutylicum (strain ATCC 824 / DSM 792 / JCM 1419 / IAM 19013 / LMG 5710 / NBRC 13948 / NRRL B-527 / VKM B-1787 / 2291 / W), this protein is Large ribosomal subunit protein uL30.